Here is a 421-residue protein sequence, read N- to C-terminus: Trimethyllysine dioxygenase, mitochondrial (421 aa).

Residues 1–15 constitute a mitochondrion transit peptide; it reads MWYHRLSHLHSRLQD. N6-acetyllysine is present on residues Lys179 and Lys236. Fe cation-binding residues include His242, Asp244, and His389.

The protein belongs to the gamma-BBH/TMLD family. In terms of assembly, homodimer. Fe(2+) serves as cofactor. L-ascorbate is required as a cofactor. As to expression, all isoforms, but isoform 8, are widely expressed in adult and fetal tissues. Isoform 8 is restricted to heart and skeletal muscle.

The protein localises to the mitochondrion matrix. It carries out the reaction N(6),N(6),N(6)-trimethyl-L-lysine + 2-oxoglutarate + O2 = (3S)-3-hydroxy-N(6),N(6),N(6)-trimethyl-L-lysine + succinate + CO2. It functions in the pathway amine and polyamine biosynthesis; carnitine biosynthesis. Functionally, converts trimethyllysine (TML) into hydroxytrimethyllysine (HTML). The chain is Trimethyllysine dioxygenase, mitochondrial (TMLHE) from Homo sapiens (Human).